The primary structure comprises 503 residues: uncharacterized protein (503 aa).

Basic and acidic residues-rich tracts occupy residues 1-23 (MAHE…EKVR) and 203-215 (PLEK…RSDQ). Disordered regions lie at residues 1–29 (MAHE…TVPV) and 149–227 (ETFQ…SNSS). Residues Ser239 and Ser243 each carry the phosphoserine modification. Disordered regions lie at residues 346–370 (LDPA…GAKW) and 450–475 (LLSS…GAPK). Positions 347–356 (DPARLPRPDM) are enriched in basic and acidic residues.

This is an uncharacterized protein from Bos taurus (Bovine).